A 754-amino-acid polypeptide reads, in one-letter code: NAD(P)H-quinone oxidoreductase subunit 5, chloroplastic (754 aa).

16 helical membrane passes run phenylalanine 8 to leucine 28, tryptophan 40 to isoleucine 60, valine 89 to isoleucine 109, phenylalanine 125 to isoleucine 145, isoleucine 147 to threonine 167, glycine 185 to phenylalanine 205, asparagine 219 to alanine 239, threonine 258 to alanine 278, leucine 280 to isoleucine 300, leucine 327 to isoleucine 347, alanine 354 to serine 374, threonine 396 to serine 416, tryptophan 425 to tyrosine 445, phenylalanine 552 to phenylalanine 572, phenylalanine 608 to phenylalanine 628, and leucine 733 to phenylalanine 753.

Belongs to the complex I subunit 5 family. NDH is composed of at least 16 different subunits, 5 of which are encoded in the nucleus.

The protein localises to the plastid. Its subcellular location is the chloroplast thylakoid membrane. The catalysed reaction is a plastoquinone + NADH + (n+1) H(+)(in) = a plastoquinol + NAD(+) + n H(+)(out). It carries out the reaction a plastoquinone + NADPH + (n+1) H(+)(in) = a plastoquinol + NADP(+) + n H(+)(out). NDH shuttles electrons from NAD(P)H:plastoquinone, via FMN and iron-sulfur (Fe-S) centers, to quinones in the photosynthetic chain and possibly in a chloroplast respiratory chain. The immediate electron acceptor for the enzyme in this species is believed to be plastoquinone. Couples the redox reaction to proton translocation, and thus conserves the redox energy in a proton gradient. This Morus indica (Mulberry) protein is NAD(P)H-quinone oxidoreductase subunit 5, chloroplastic (ndhF).